The following is a 184-amino-acid chain: Peptide deformylase (184 aa).

Cys-111 and His-154 together coordinate Fe cation. Glu-155 is an active-site residue. His-158 lines the Fe cation pocket.

It belongs to the polypeptide deformylase family. The cofactor is Fe(2+).

The enzyme catalyses N-terminal N-formyl-L-methionyl-[peptide] + H2O = N-terminal L-methionyl-[peptide] + formate. In terms of biological role, removes the formyl group from the N-terminal Met of newly synthesized proteins. Requires at least a dipeptide for an efficient rate of reaction. N-terminal L-methionine is a prerequisite for activity but the enzyme has broad specificity at other positions. The sequence is that of Peptide deformylase from Macrococcus caseolyticus (strain JCSC5402) (Macrococcoides caseolyticum).